The chain runs to 536 residues: Mannuronan C5-epimerase (536 aa).

The signal sequence occupies residues 1–36; sequence MNSHASNGRSRNWPHALLESALLTSALLMASSVALA. PbH1 repeat units follow at residues 298–320, 322–345, 347–369, 371–393, and 394–416; these read TRDF…DPHD, SHGL…IISR, VDNS…VLDR, SVGN…TLYE, and SGNN…RVRN. His319 acts as the Proton acceptor in catalysis.

It belongs to the D-mannuronate C5-epimerase family.

The protein localises to the periplasm. The enzyme catalyses [(1-&gt;4)-beta-D-mannuronosyl](n) = [alginate](n). Its pathway is glycan biosynthesis; alginate biosynthesis. Its function is as follows. Catalyzes the epimerization of beta-D-mannuronate to alpha-L-guluronate during the synthesis of the linear polysaccharide alginate. In addition, is part of a periplasmic protein complex that protects alginate from degradation by AlgL by channeling the newly formed alginate polymer through a scaffold that transfers the alginate polymer through the periplasmic space to the outer membrane secretin AlgE. This chain is Mannuronan C5-epimerase (algG), found in Pseudomonas syringae pv. tomato (strain ATCC BAA-871 / DC3000).